The chain runs to 263 residues: Inactive adenylate kinase (263 aa).

It belongs to the adenylate kinase family.

It localises to the cytoplasm. Its function is as follows. Lacks adenylate kinase activity. This is Inactive adenylate kinase from Plasmodium falciparum (isolate 3D7).